The sequence spans 84 residues: Transcription elongation factor 1 homolog (84 aa).

4 residues coordinate Zn(2+): Cys26, Cys29, Cys50, and Cys53.

It belongs to the ELOF1 family.

Its subcellular location is the nucleus. Transcription elongation factor implicated in the maintenance of proper chromatin structure in actively transcribed regions. In Caenorhabditis elegans, this protein is Transcription elongation factor 1 homolog.